We begin with the raw amino-acid sequence, 556 residues long: Urocanate hydratase (556 aa).

NAD(+)-binding positions include 52 to 53 (GG), glutamine 130, 176 to 178 (GMG), glutamate 196, arginine 201, 242 to 243 (NA), 263 to 267 (QTSAH), 273 to 274 (YL), and tyrosine 322. Residue cysteine 410 is part of the active site. NAD(+) is bound at residue glycine 492.

Belongs to the urocanase family. Requires NAD(+) as cofactor.

The protein resides in the cytoplasm. The catalysed reaction is 4-imidazolone-5-propanoate = trans-urocanate + H2O. The protein operates within amino-acid degradation; L-histidine degradation into L-glutamate; N-formimidoyl-L-glutamate from L-histidine: step 2/3. Functionally, catalyzes the conversion of urocanate to 4-imidazolone-5-propionate. This Shewanella woodyi (strain ATCC 51908 / MS32) protein is Urocanate hydratase.